Reading from the N-terminus, the 358-residue chain is Putative ZDHHC-type palmitoyltransferase 4 (358 aa).

The next 4 helical transmembrane spans lie at F28 to F48, L57 to I77, Y171 to L191, and L210 to G230. One can recognise a DHHC domain in the interval S127–S177. N-linked (GlcNAc...) asparagine glycosylation is found at N255 and N296. A disordered region spans residues N302–K358. A compositionally biased stretch (low complexity) spans N305 to N332.

The protein belongs to the DHHC palmitoyltransferase family.

The protein localises to the membrane. It catalyses the reaction L-cysteinyl-[protein] + hexadecanoyl-CoA = S-hexadecanoyl-L-cysteinyl-[protein] + CoA. This is Putative ZDHHC-type palmitoyltransferase 4 from Dictyostelium discoideum (Social amoeba).